A 76-amino-acid chain; its full sequence is MVKFQIKKGDKVQVIAGDDKGKVAEVIKVMPKSSQVIVAGCKVAKKSVKPSEQNPKGGFVNKEMPIHISNVKKVEA.

It belongs to the universal ribosomal protein uL24 family. In terms of assembly, part of the 50S ribosomal subunit.

One of two assembly initiator proteins, it binds directly to the 5'-end of the 23S rRNA, where it nucleates assembly of the 50S subunit. Its function is as follows. One of the proteins that surrounds the polypeptide exit tunnel on the outside of the subunit. In Wolinella succinogenes (strain ATCC 29543 / DSM 1740 / CCUG 13145 / JCM 31913 / LMG 7466 / NCTC 11488 / FDC 602W) (Vibrio succinogenes), this protein is Large ribosomal subunit protein uL24.